A 258-amino-acid chain; its full sequence is Regulatory protein RecX (258 aa).

This sequence belongs to the RecX family.

It is found in the cytoplasm. Modulates RecA activity. This Streptococcus pyogenes serotype M3 (strain ATCC BAA-595 / MGAS315) protein is Regulatory protein RecX.